The sequence spans 377 residues: Subtilisin-like protease CPC735_012930 (377 aa).

The first 20 residues, 1–20 (MSILFKIFASTLAVVSVVNA), serve as a signal peptide directing secretion. The propeptide occupies 21 to 118 (GELLNFENER…VEPDRMASAT (98 aa)). One can recognise an Inhibitor I9 domain in the interval 36–114 (SYIVVMKDGT…HVKYVEPDRM (79 aa)). The region spanning 128–377 (SWGLGRISHT…NKLLYNKSGF (250 aa)) is the Peptidase S8 domain. Active-site charge relay system residues include aspartate 160 and histidine 191. The N-linked (GlcNAc...) asparagine glycan is linked to asparagine 252. The active-site Charge relay system is serine 323. N-linked (GlcNAc...) asparagine glycosylation is found at asparagine 364 and asparagine 373.

It belongs to the peptidase S8 family.

It is found in the secreted. Secreted subtilisin-like serine protease with keratinolytic activity that contributes to pathogenicity. The sequence is that of Subtilisin-like protease CPC735_012930 from Coccidioides posadasii (strain C735) (Valley fever fungus).